Reading from the N-terminus, the 679-residue chain is Recombination repair protein 1 (679 aa).

The segment at 1-407 (MPRVKAVKKQ…TKKAKKAETK (407 aa)) is disordered. Residues 45–55 (AKGKPRARKAT) are compositionally biased toward basic residues. Residues 106–116 (ATAEAEPEPKV) are compositionally biased toward basic and acidic residues. Residues T133 and T140 each carry the phosphothreonine modification. Position 142 is a phosphoserine (S142). 2 stretches are compositionally biased toward basic and acidic residues: residues 179-189 (EPPKQRARKEA) and 203-214 (SKEKVQKAETAA). The residue at position 258 (S258) is a Phosphoserine. Positions 312 to 347 (KKEGKEPAPGKKQKKSADKENGVVEEEAKPSTETKP) are enriched in basic and acidic residues. The AP endonuclease stretch occupies residues 428–679 (KICSWNVAGL…HCPITIFFNI (252 aa)). E461 is a Mg(2+) binding site. Y533 is an active-site residue. Residues D572, N574, and D669 each contribute to the Mg(2+) site. Catalysis depends on D572, which acts as the Proton donor/acceptor.

Belongs to the DNA repair enzymes AP/ExoA family. Interacts with the zeta DNA polymerase complex; interacts (via the N-terminus) with the accessory subunit PolZ2/Rev7 and also interacts with the catalytic component PolZ1, however the interaction with PolZ1 is likely via PolZ2. Mg(2+) is required as a cofactor. Requires Mn(2+) as cofactor.

It is found in the nucleus. The enzyme catalyses Exonucleolytic cleavage in the 3'- to 5'-direction to yield nucleoside 5'-phosphates.. Its function is as follows. Plays a role in the cellular response to oxidative stress by promoting DNA repair mechanisms such as base excision repair and possibly homologous recombination repair. Functions as an apurinic/apyrimidinic (AP) endodeoxyribonuclease in the DNA base excision repair (BER) pathway of DNA lesions induced by oxidative and alkylating agents. Likely to initiate repair of AP sites in DNA by catalyzing hydrolytic incision of the phosphodiester backbone immediately adjacent to the damage, generating a single-strand break with 5'-deoxyribose phosphate and 3'-hydroxyl ends. Has a 3'-5' exoribonuclease activity on mismatched deoxyribonucleotides at the 3' termini of nicked or gapped DNA molecules during short-patch BER. Has apurinic endonuclease and double-stranded DNA 3'-exonuclease activities and carries out single-stranded DNA renaturation in a Mg(2+)-dependent manner. Activity is more efficient in purine-rich regions of dsDNA than in pyrimidine-rich regions. This Drosophila melanogaster (Fruit fly) protein is Recombination repair protein 1.